Reading from the N-terminus, the 156-residue chain is SsrA-binding protein (156 aa).

Belongs to the SmpB family.

Its subcellular location is the cytoplasm. Functionally, required for rescue of stalled ribosomes mediated by trans-translation. Binds to transfer-messenger RNA (tmRNA), required for stable association of tmRNA with ribosomes. tmRNA and SmpB together mimic tRNA shape, replacing the anticodon stem-loop with SmpB. tmRNA is encoded by the ssrA gene; the 2 termini fold to resemble tRNA(Ala) and it encodes a 'tag peptide', a short internal open reading frame. During trans-translation Ala-aminoacylated tmRNA acts like a tRNA, entering the A-site of stalled ribosomes, displacing the stalled mRNA. The ribosome then switches to translate the ORF on the tmRNA; the nascent peptide is terminated with the 'tag peptide' encoded by the tmRNA and targeted for degradation. The ribosome is freed to recommence translation, which seems to be the essential function of trans-translation. The chain is SsrA-binding protein from Desulfitobacterium hafniense (strain DSM 10664 / DCB-2).